The sequence spans 777 residues: 1,4-alpha-glucan branching enzyme GlgB (777 aa).

Asp-408 acts as the Nucleophile in catalysis. Glu-461 functions as the Proton donor in the catalytic mechanism.

This sequence belongs to the glycosyl hydrolase 13 family. GlgB subfamily. In terms of assembly, monomer.

The enzyme catalyses Transfers a segment of a (1-&gt;4)-alpha-D-glucan chain to a primary hydroxy group in a similar glucan chain.. The protein operates within glycan biosynthesis; glycogen biosynthesis. Its function is as follows. Catalyzes the formation of the alpha-1,6-glucosidic linkages in glycogen by scission of a 1,4-alpha-linked oligosaccharide from growing alpha-1,4-glucan chains and the subsequent attachment of the oligosaccharide to the alpha-1,6 position. The chain is 1,4-alpha-glucan branching enzyme GlgB from Actinobacillus pleuropneumoniae serotype 7 (strain AP76).